Here is a 99-residue protein sequence, read N- to C-terminus: Plastocyanin (99 aa).

The Plastocyanin-like domain occupies 1-99 (VEVLLGASDG…AGMVGQVTVN (99 aa)). The Cu cation site is built by H37, C84, H87, and M92.

This sequence belongs to the plastocyanin family. Requires Cu(2+) as cofactor.

It is found in the plastid. The protein localises to the chloroplast thylakoid membrane. Participates in electron transfer between P700 and the cytochrome b6-f complex in photosystem I. This is Plastocyanin (PETE) from Vicia faba (Broad bean).